The sequence spans 116 residues: Large ribosomal subunit protein uL18 (116 aa).

It belongs to the universal ribosomal protein uL18 family. As to quaternary structure, part of the 50S ribosomal subunit; part of the 5S rRNA/L5/L18/L25 subcomplex. Contacts the 5S and 23S rRNAs.

Its function is as follows. This is one of the proteins that bind and probably mediate the attachment of the 5S RNA into the large ribosomal subunit, where it forms part of the central protuberance. In Ectopseudomonas mendocina (strain ymp) (Pseudomonas mendocina), this protein is Large ribosomal subunit protein uL18.